The primary structure comprises 466 residues: GVGFKAGVKDYKLTYYTPDYETLDTDILAAFRVTPQPGVPAEEAGAAVAAESSTGTWTTVWTDGLTSLDRYKGRCYHIEPVAGEDNQYIVYVAYPLDLFEEGSVTNMFTSIVGNVFGFKALRALRLEDLRIPPAYSKTFQGPPHGIQVERDKLNKYGRPLLGCTTKPKLGLSAKNYGRAVYECLRGGLDFTKDDENVNSQPFMRWRDRFLFCAEAIYKAQAXTGEIKGHYLNATAGTCEEMIKRAAFASELGVPIVMHDYLTGGFTANTSLSHYCRNHGLLLHIHRAMHAVIDRQKNHGIHFRVLAKALRLSGGDHIHSGTVVGKLEGERDITLGFVDLLRDDYIEKDRSRGIYFTQFWVSLPGVLPVASGGIHVWHMPALTEIFGDDSVLQFGGGTLGHPWGNAPGAVANRVALEACVQARNEGQDLAREGNEIIRKASKWSPELAAACEVWKEIKFVFEAMDTL.

Lys5 is modified (N6,N6,N6-trimethyllysine). Asn114 and Thr164 together coordinate substrate. Lys166 acts as the Proton acceptor in catalysis. Lys168 serves as a coordination point for substrate. Residues Lys192, Asp194, and Glu195 each contribute to the Mg(2+) site. The residue at position 192 (Lys192) is an N6-carboxylysine. The active-site Proton acceptor is the His285. Substrate contacts are provided by Arg286, His318, and Ser370.

It belongs to the RuBisCO large chain family. Type I subfamily. In terms of assembly, heterohexadecamer of 8 large chains and 8 small chains; disulfide-linked. The disulfide link is formed within the large subunit homodimers. Mg(2+) is required as a cofactor. In terms of processing, the disulfide bond which can form in the large chain dimeric partners within the hexadecamer appears to be associated with oxidative stress and protein turnover.

It localises to the plastid. It is found in the chloroplast. The catalysed reaction is 2 (2R)-3-phosphoglycerate + 2 H(+) = D-ribulose 1,5-bisphosphate + CO2 + H2O. The enzyme catalyses D-ribulose 1,5-bisphosphate + O2 = 2-phosphoglycolate + (2R)-3-phosphoglycerate + 2 H(+). RuBisCO catalyzes two reactions: the carboxylation of D-ribulose 1,5-bisphosphate, the primary event in carbon dioxide fixation, as well as the oxidative fragmentation of the pentose substrate in the photorespiration process. Both reactions occur simultaneously and in competition at the same active site. The chain is Ribulose bisphosphate carboxylase large chain from Drosera peltata (Pale sundew).